The chain runs to 814 residues: Lon protease (814 aa).

Residues 1-20 are disordered; the sequence is MANEAHNIEHTDPEFRDDSA. In terms of domain architecture, Lon N-terminal spans 25–219; it reads LPLLPVRDTV…KINQHLAKEL (195 aa). 372-379 is an ATP binding site; that stretch reads GPPGVGKT. Residues 610–792 form the Lon proteolytic domain; that stretch reads TKRAGVVVGL…DEVLEIALPS (183 aa). Residues serine 697 and lysine 740 contribute to the active site.

This sequence belongs to the peptidase S16 family. In terms of assembly, homohexamer. Organized in a ring with a central cavity.

It localises to the cytoplasm. The catalysed reaction is Hydrolysis of proteins in presence of ATP.. Its function is as follows. ATP-dependent serine protease that mediates the selective degradation of mutant and abnormal proteins as well as certain short-lived regulatory proteins. Required for cellular homeostasis and for survival from DNA damage and developmental changes induced by stress. Degrades polypeptides processively to yield small peptide fragments that are 5 to 10 amino acids long. Binds to DNA in a double-stranded, site-specific manner. The protein is Lon protease of Koribacter versatilis (strain Ellin345).